The chain runs to 512 residues: Tyrosine-protein kinase Lyn (512 aa).

Positions Met1 to Glu62 are disordered. Gly2 carries the N-myristoyl glycine lipid modification. A lipid anchor (S-palmitoyl cysteine) is attached at Cys3. Residues Ser11 and Ser13 each carry the phosphoserine modification. Residues Glu63–Thr123 enclose the SH3 domain. The 98-residue stretch at Trp129–Cys226 folds into the SH2 domain. Phosphotyrosine is present on Tyr193. Ser228 carries the post-translational modification Phosphoserine. A Protein kinase domain is found at Ile247–Tyr501. ATP contacts are provided by residues Leu253–Val261 and Lys275. Phosphotyrosine occurs at positions 306 and 316. Asp367 acts as the Proton acceptor in catalysis. Tyr397 carries the phosphotyrosine; by autocatalysis modification. A phosphotyrosine mark is found at Tyr460 and Tyr473. Phosphotyrosine; by autocatalysis, CSK and MATK is present on Tyr508.

The protein belongs to the protein kinase superfamily. Tyr protein kinase family. SRC subfamily. Interacts with TEC. Interacts (via SH2 domain) with FLT3 (tyrosine phosphorylated). Interacts with LIME1 and with CD79A upon activation of the B-cell antigen receptor. Interacts with the B-cell receptor complex. Interacts with phosphorylated THEMIS2. Interacts with EPOR. Interacts with MS4A2/FCER1B. Interaction (via the SH2 and SH3 domains) with MUC1 is stimulated by IL7 and the subsequent phosphorylation increases the binding between MUC1 and CTNNB1/beta-catenin. Interacts with ADAM15. Interacts with NDFIP2 and more weakly with NDFIP1. Interacts with FASLG. Interacts with KIT. Interacts with HCLS1. Interacts with FCGR2B. Interacts with FCGR1A; the interaction may be indirect. Interacts with CD19, CD22, CD79A and CD79B. Interacts (via SH3 domain) with CBLC, PPP1R15A and PDE4A. Interacts with TGFB1I1. Interacts (via SH3 domain) with PIK3R1, the regulatory subunit of phosphatidylinositol 3-kinase; this interaction enhances phosphatidylinositol 3-kinase activity. Interacts with CSF2RB, the common subunit of the IL3, IL5 and CSF2 receptors. Interacts with PAG1; identified in a complex with PAG1 and STAT3. Interacts with ABL1. Interacts with PTPN6/SHP-1. Interacts (via SH3 domain) with SCIMP (via proline-rich region). This interaction facilitates the phosphorylation of SCIMP on 'Tyr-107', which enhances binding of SCIMP to TLR4, and consequently the phosphorylation of TLR4 in response to stimulation by lipopolysaccharide in macrophages. Interacts with LPXN (via LD motif 3) and the interaction is induced upon B-cell antigen receptor (BCR) activation. Interacts (via SH3-domain) with ANKRD54 (via ankyrin repeat region) in an activation-independent status of LYN. Forms a multiprotein complex with ANKRD54 and HCLS1. Interacts (via SH2 and SH3 domains) with UNC119; leading to LYN activation. Interacts with CD36. Interacts with LYN. Interacts with SKAP1 and FYB1; this interaction promotes the phosphorylation of CLNK. Interacts with BCAR1/CAS and NEDD9/HEF1. As to quaternary structure, (Microbial infection) Interacts with Epstein-Barr virus LMP2A. In terms of assembly, (Microbial infection) Interacts with Herpes virus saimiri tyrosine kinase interacting protein (Tip). Ubiquitinated by CBL, leading to its degradation. Ubiquitination is SH3-dependent. In terms of processing, autophosphorylated. Phosphorylated on tyrosine residues in response to KIT signaling. Phosphorylation at Tyr-397 is required for optimal activity. Phosphorylation at Tyr-508 inhibits kinase activity. Phosphorylated at Tyr-508 by CSK. Dephosphorylated by PTPRC/CD45. Becomes rapidly phosphorylated upon activation of the B-cell receptor and the immunoglobulin receptor FCGR1A. Phosphorylated in response to ITGB1 in B-cells. As to expression, detected in monocytes (at protein level). Detected in placenta, and in fetal brain, lung, liver and kidney. Widely expressed in a variety of organs, tissues, and cell types such as epidermoid, hematopoietic, and neuronal cells. Expressed in primary neuroblastoma tumors.

The protein localises to the cell membrane. It localises to the nucleus. It is found in the cytoplasm. Its subcellular location is the perinuclear region. The protein resides in the golgi apparatus. The protein localises to the membrane. It catalyses the reaction L-tyrosyl-[protein] + ATP = O-phospho-L-tyrosyl-[protein] + ADP + H(+). Its activity is regulated as follows. Subject to autoinhibition, mediated by intramolecular interactions between the SH2 domain and the C-terminal phosphotyrosine. Phosphorylation at Tyr-397 is required for optimal activity. Phosphorylated by CSK at Tyr-508; phosphorylation at Tyr-508 inhibits kinase activity. Kinase activity is modulated by dephosphorylation by PTPRC/CD45. Inhibited by Dasatinib, PP2, and SU6656. Non-receptor tyrosine-protein kinase that transmits signals from cell surface receptors and plays an important role in the regulation of innate and adaptive immune responses, hematopoiesis, responses to growth factors and cytokines, integrin signaling, but also responses to DNA damage and genotoxic agents. Functions primarily as negative regulator, but can also function as activator, depending on the context. Required for the initiation of the B-cell response, but also for its down-regulation and termination. Plays an important role in the regulation of B-cell differentiation, proliferation, survival and apoptosis, and is important for immune self-tolerance. Acts downstream of several immune receptors, including the B-cell receptor, CD79A, CD79B, CD5, CD19, CD22, FCER1, FCGR2, FCGR1A, TLR2 and TLR4. Plays a role in the inflammatory response to bacterial lipopolysaccharide. Mediates the responses to cytokines and growth factors in hematopoietic progenitors, platelets, erythrocytes, and in mature myeloid cells, such as dendritic cells, neutrophils and eosinophils. Acts downstream of EPOR, KIT, MPL, the chemokine receptor CXCR4, as well as the receptors for IL3, IL5 and CSF2. Plays an important role in integrin signaling. Regulates cell proliferation, survival, differentiation, migration, adhesion, degranulation, and cytokine release. Involved in the regulation of endothelial activation, neutrophil adhesion and transendothelial migration. Down-regulates signaling pathways by phosphorylation of immunoreceptor tyrosine-based inhibitory motifs (ITIM), that then serve as binding sites for phosphatases, such as PTPN6/SHP-1, PTPN11/SHP-2 and INPP5D/SHIP-1, that modulate signaling by dephosphorylation of kinases and their substrates. Phosphorylates LIME1 in response to CD22 activation. Phosphorylates BTK, CBL, CD5, CD19, CD72, CD79A, CD79B, CSF2RB, DOK1, HCLS1, LILRB3/PIR-B, MS4A2/FCER1B, SYK and TEC. Promotes phosphorylation of SIRPA, PTPN6/SHP-1, PTPN11/SHP-2 and INPP5D/SHIP-1. Mediates phosphorylation of the BCR-ABL fusion protein. Required for rapid phosphorylation of FER in response to FCER1 activation. Mediates KIT phosphorylation. Acts as an effector of EPOR (erythropoietin receptor) in controlling KIT expression and may play a role in erythroid differentiation during the switch between proliferation and maturation. Depending on the context, activates or inhibits several signaling cascades. Regulates phosphatidylinositol 3-kinase activity and AKT1 activation. Regulates activation of the MAP kinase signaling cascade, including activation of MAP2K1/MEK1, MAPK1/ERK2, MAPK3/ERK1, MAPK8/JNK1 and MAPK9/JNK2. Mediates activation of STAT5A and/or STAT5B. Phosphorylates LPXN on 'Tyr-72'. Kinase activity facilitates TLR4-TLR6 heterodimerization and signal initiation. Phosphorylates SCIMP on 'Tyr-107'; this enhances binding of SCIMP to TLR4, promoting the phosphorylation of TLR4, and a selective cytokine response to lipopolysaccharide in macrophages. Phosphorylates CLNK. Phosphorylates BCAR1/CAS and NEDD9/HEF1. In Homo sapiens (Human), this protein is Tyrosine-protein kinase Lyn (LYN).